A 222-amino-acid chain; its full sequence is Protein-L-isoaspartate O-methyltransferase (222 aa).

Serine 69 is a catalytic residue.

Belongs to the methyltransferase superfamily. L-isoaspartyl/D-aspartyl protein methyltransferase family.

The protein resides in the cytoplasm. It carries out the reaction [protein]-L-isoaspartate + S-adenosyl-L-methionine = [protein]-L-isoaspartate alpha-methyl ester + S-adenosyl-L-homocysteine. In terms of biological role, catalyzes the methyl esterification of L-isoaspartyl residues in peptides and proteins that result from spontaneous decomposition of normal L-aspartyl and L-asparaginyl residues. It plays a role in the repair and/or degradation of damaged proteins. This Nitrosomonas eutropha (strain DSM 101675 / C91 / Nm57) protein is Protein-L-isoaspartate O-methyltransferase.